The chain runs to 238 residues: Probable transcriptional regulatory protein YcdB (238 aa).

The protein belongs to the TACO1 family. YeeN subfamily.

The protein localises to the cytoplasm. This is Probable transcriptional regulatory protein YcdB (ycdB) from Lactococcus lactis subsp. lactis (strain IL1403) (Streptococcus lactis).